We begin with the raw amino-acid sequence, 259 residues long: Ribonuclease PH (259 aa).

Residues R88 and 126 to 128 each bind phosphate; that span reads GTR.

The protein belongs to the RNase PH family. Homohexameric ring arranged as a trimer of dimers.

The catalysed reaction is tRNA(n+1) + phosphate = tRNA(n) + a ribonucleoside 5'-diphosphate. Its function is as follows. Phosphorolytic 3'-5' exoribonuclease that plays an important role in tRNA 3'-end maturation. Removes nucleotide residues following the 3'-CCA terminus of tRNAs; can also add nucleotides to the ends of RNA molecules by using nucleoside diphosphates as substrates, but this may not be physiologically important. Probably plays a role in initiation of 16S rRNA degradation (leading to ribosome degradation) during starvation. This is Ribonuclease PH from Mycobacterium avium (strain 104).